Reading from the N-terminus, the 490-residue chain is Dual specificity protein kinase CLK3 (490 aa).

The segment at Met1–Asp138 is disordered. The residue at position 7 (Tyr7) is a Phosphotyrosine. Residues Ser9, Ser49, Ser51, Ser67, Ser76, and Ser78 each carry the phosphoserine modification. Basic and acidic residues-rich tracts occupy residues Tyr26–Pro56 and Glu63–Ser76. Positions Arg88 to Arg116 are enriched in basic residues. Residues Ser117–Lys130 show a composition bias toward low complexity. Ser135 carries the post-translational modification Phosphoserine. The 317-residue stretch at Tyr156–Phe472 folds into the Protein kinase domain. Residues Leu162–Val170 and Lys186 contribute to the ATP site. Asp283 (proton acceptor) is an active-site residue.

It belongs to the protein kinase superfamily. CMGC Ser/Thr protein kinase family. Lammer subfamily. Post-translationally, autophosphorylates on all three types of residues. In terms of tissue distribution, present at high levels in testis and ovary. In testis, expression is restricted to elongated, maturing spermatozoa. Also present in spleen, brain, lung and liver (at protein level).

It is found in the nucleus. It localises to the cytoplasm. The protein localises to the cytoplasmic vesicle. The protein resides in the secretory vesicle. Its subcellular location is the acrosome. It catalyses the reaction L-seryl-[protein] + ATP = O-phospho-L-seryl-[protein] + ADP + H(+). The enzyme catalyses L-threonyl-[protein] + ATP = O-phospho-L-threonyl-[protein] + ADP + H(+). The catalysed reaction is L-tyrosyl-[protein] + ATP = O-phospho-L-tyrosyl-[protein] + ADP + H(+). Leucettine L41 inhibits its kinase activity and affects the regulation of alternative splicing mediated by phosphorylation of SR proteins. Dual specificity kinase acting on both serine/threonine and tyrosine-containing substrates. Phosphorylates serine- and arginine-rich (SR) proteins of the spliceosomal complex. May be a constituent of a network of regulatory mechanisms that enable SR proteins to control RNA splicing and can cause redistribution of SR proteins from speckles to a diffuse nucleoplasmic distribution. Phosphorylates SRSF1 and SRSF3. Regulates the alternative splicing of tissue factor (F3) pre-mRNA in endothelial cells. This chain is Dual specificity protein kinase CLK3, found in Mus musculus (Mouse).